The following is an 837-amino-acid chain: Striatin-interacting protein 1 (837 aa).

Position 1 is an N-acetylmethionine (Met1). Disordered regions lie at residues 1-66 (MEPA…SESP) and 333-423 (AASP…KGLP). Residues 18–35 (PQPPPPPPPATAQPPPGA) show a composition bias toward pro residues. Positions 47-60 (KAREFNRNQRKDSE) are enriched in basic and acidic residues. 3 positions are modified to phosphoserine: Ser59, Ser335, and Ser339. A compositionally biased stretch (basic and acidic residues) spans 356-377 (KALIKQDNLDAFNERDPYKADD). A compositionally biased stretch (acidic residues) spans 378–391 (SREEEEENDDDNSL). Ser788 is subject to Phosphoserine. Residues 796–837 (DNCLQSVLGQRVDLPEDFQMNYDLWLEREVFSKPISWEELLQ) form a required for STRIPAK core complex formation region.

The protein belongs to the STRIP family. In terms of assembly, part of the core of STRIPAK complexes composed of PP2A catalytic and scaffolding subunits, the striatins (PP2A regulatory subunits), the striatin-associated proteins MOB4, STRIP1 and STRIP2, PDCD10 and members of the STE20 kinases, such as STK24 and STK26. The STRIPAK complex can be extended by adapter proteins such as SLMAP:SIKE1, CTTNBP2 or CTTNBP2NL. Interacts with CDC42BPB. Interacts with CTTNBP2NL.

The protein localises to the cytoplasm. In terms of biological role, plays a role in the regulation of cell morphology and cytoskeletal organization. Required in the cortical actin filament dynamics and cell shape. Part of the striatin-interacting phosphatase and kinase (STRIPAK) complexes. STRIPAK complexes have critical roles in protein (de)phosphorylation and are regulators of multiple signaling pathways including Hippo, MAPK, nuclear receptor and cytoskeleton remodeling. Different types of STRIPAK complexes are involved in a variety of biological processes such as cell growth, differentiation, apoptosis, metabolism and immune regulation. The sequence is that of Striatin-interacting protein 1 (STRIP1) from Macaca fascicularis (Crab-eating macaque).